Consider the following 248-residue polypeptide: Ribonuclease PH (248 aa).

Residues R86 and 124-126 (GTR) contribute to the phosphate site.

Belongs to the RNase PH family. In terms of assembly, homohexameric ring arranged as a trimer of dimers.

It catalyses the reaction tRNA(n+1) + phosphate = tRNA(n) + a ribonucleoside 5'-diphosphate. Phosphorolytic 3'-5' exoribonuclease that plays an important role in tRNA 3'-end maturation. Removes nucleotide residues following the 3'-CCA terminus of tRNAs; can also add nucleotides to the ends of RNA molecules by using nucleoside diphosphates as substrates, but this may not be physiologically important. Probably plays a role in initiation of 16S rRNA degradation (leading to ribosome degradation) during starvation. This is Ribonuclease PH from Listeria innocua serovar 6a (strain ATCC BAA-680 / CLIP 11262).